Reading from the N-terminus, the 419-residue chain is Phospholipase A1-IIgamma (419 aa).

Coiled-coil stretches lie at residues 1–21 (MKRK…EFAK) and 207–227 (NARD…KDEE). Ser236 acts as the Acyl-ester intermediate in catalysis. Active-site charge relay system residues include Ser236, Asp302, and His339.

Belongs to the AB hydrolase superfamily. Lipase family. As to expression, expressed in seedlings, stems and siliques, and, to a lower extent, in flowers.

It localises to the cytoplasm. In terms of biological role, acylhydrolase that catalyzes the hydrolysis of 1,3-diacylglycerol (1,3-DAG) and 1-monoacylglycerol (1-MAG) at the sn-1 position. High activity toward 1,3-DAG and 1-MAG, but low activity toward 1,2-diacylglycerol (1,2-DAG) and 1-lysophosphatidylcholine (1-LPC), and no activity toward phosphatidylcholine (PC), monogalactosyldiacylglycerol (MGDG), digalactosyldiacylglycerol (DGDG), triacylglycerol (TAG) and 2-monoacylglycerol (2-MAG). May be involved in the negative regulation of seedling establishment by inhibiting the breakdown, beta-oxidation and mobilization of seed storage oils. This is Phospholipase A1-IIgamma (DSEL) from Arabidopsis thaliana (Mouse-ear cress).